A 397-amino-acid polypeptide reads, in one-letter code: Mesoderm posterior protein 2 (397 aa).

4 disordered regions span residues 28-92 (WDST…REKL), 152-208 (QRGD…GRRP), 222-295 (SPSA…VPWT), and 351-376 (PNSE…SGLR). Composition is skewed to low complexity over residues 32–48 (SPAS…CDGA) and 58–71 (SCSS…ATTP). Positions 81–135 (GQRQSASEREKLRMRTLARALHELRRFLPPSLAPAGQSLTKIETLRLAIRYIGHL) constitute a bHLH domain. A run of 13 repeats spans residues 179 to 180 (GQ), 181 to 182 (GQ), 183 to 184 (GQ), 185 to 186 (GQ), 187 to 188 (GQ), 189 to 190 (GQ), 191 to 192 (GQ), 193 to 194 (GQ), 195 to 196 (GQ), 197 to 198 (GQ), 199 to 200 (GQ), 201 to 202 (GQ), and 203 to 204 (GQ). Positions 179-204 (GQGQGQGQGQGQGQGQGQGQGQGQGQ) are 13 X 2 AA tandem repeats of G-Q. The segment covering 180–206 (QGQGQGQGQGQGQGQGQGQGQGQGQGR) has biased composition (gly residues). Residues 235–244 (RLGRGVHDTD) show a composition bias toward basic and acidic residues. 2 stretches are compositionally biased toward polar residues: residues 258–270 (PPYS…SDAS) and 365–375 (SEASPPQSSGL).

Post-translationally, degraded by the proteasome.

The protein localises to the nucleus. Transcription factor with important role in somitogenesis. Defines the rostrocaudal patterning of the somite by participating in distinct Notch pathways. Also regulates the FGF signaling pathway. Specifies the rostral half of the somites. Generates rostro-caudal polarity of somites by down-regulating in the presumptive rostral domain DLL1, a Notch ligand. Participates in the segment border formation by activating in the anterior presomitic mesoderm LFNG, a negative regulator of DLL1-Notch signaling. Acts as a strong suppressor of Notch activity. Together with MESP1 is involved in the epithelialization of somitic mesoderm and in the development of cardiac mesoderm. This chain is Mesoderm posterior protein 2 (MESP2), found in Homo sapiens (Human).